We begin with the raw amino-acid sequence, 45 residues long: Photosystem II reaction center protein K (45 aa).

The propeptide occupies 1–8 (MEAVLLLA). The chain crosses the membrane as a helical span at residues 24-44 (MPVIPLFFLALAFVWQAAVGF).

Belongs to the PsbK family. PSII is composed of 1 copy each of membrane proteins PsbA, PsbB, PsbC, PsbD, PsbE, PsbF, PsbH, PsbI, PsbJ, PsbK, PsbL, PsbM, PsbT, PsbX, PsbY, PsbZ, Psb30/Ycf12, peripheral proteins PsbO, CyanoQ (PsbQ), PsbU, PsbV and a large number of cofactors. It forms dimeric complexes.

It localises to the cellular thylakoid membrane. In terms of biological role, one of the components of the core complex of photosystem II (PSII). PSII is a light-driven water:plastoquinone oxidoreductase that uses light energy to abstract electrons from H(2)O, generating O(2) and a proton gradient subsequently used for ATP formation. It consists of a core antenna complex that captures photons, and an electron transfer chain that converts photonic excitation into a charge separation. The protein is Photosystem II reaction center protein K of Acaryochloris marina (strain MBIC 11017).